A 371-amino-acid polypeptide reads, in one-letter code: MNKNKIDVKIETKKGSMDEWPEPIVRVQSLAESNLSSLPDRYIKPASLRPTTTEDAPTATNIPIIDLEGLFSEEGLSDDVIMARISEACRGWGFFQVVNHGVKPELMDAARENWREFFHMPVNAKETYSNSPRTYEGYGSRLGVEKGASLDWSDYYFLHLLPHHLKDFNKWPSFPPTIREVIDEYGEELVKLSGRIMRVLSTNLGLKEDKFQEAFGGENIGACLRVNYYPKCPRPELALGLSPHSDPGGMTILLPDDQVFGLQVRKDDTWITVKPHPHAFIVNIGDQIQILSNSTYKSVEHRVIVNSDKERVSLAFFYNPKSDIPIQPLQELVSTHNPPLYPPMTFDQYRLFIRTQGPQGKSHVESHISPR.

The 102-residue stretch at 219 to 320 (NIGACLRVNY…RVSLAFFYNP (102 aa)) folds into the Fe2OG dioxygenase domain. Arginine 225 is a binding site for jasmonate. Asparagine 227 and tyrosine 229 together coordinate 2-oxoglutarate. Fe cation is bound by residues histidine 244, aspartate 246, and histidine 301. 2-oxoglutarate is bound by residues arginine 311 and serine 313. Jasmonate is bound by residues arginine 350 and arginine 354.

This sequence belongs to the iron/ascorbate-dependent oxidoreductase family. L-ascorbate is required as a cofactor. Requires Fe(2+) as cofactor.

The catalysed reaction is jasmonate + 2-oxoglutarate + O2 = (1R,2R)-12-hydroxyjasmonate + succinate + CO2. Functionally, 2-oxoglutarate-dependent dioxygenase involved in the oxidation of jasmonate (JA), a stress-induced phytohormone synthesized in response to attack by pathogens and herbivores, which triggers the activation of defense responses via the JA-mediated signaling pathway. Converts JA to 12-hydroxyjasmonate (12OH-JA), an inactive form of JA. Is specific to free JA, and cannot oxidize the bioactive form jasmonoyl-L-isoleucine (JA-Ile) or other JA-amino acid conjugates. Prevents over-accumulation of JA and indirectly its bioactive form JA-Ile under stress response. Acts as a negative regulator of JA-mediated defense signaling, by contributing to 12OH-JA accumulation, which represses JA defense responses upon infection by the fungal pathogen Botrytis cinerea. Acts as a negative regulator of JA-mediated defense responses upon infestation by the herbivorous caterpillar Mamestra brassicae. May be involved in the catabolism of cytotoxic polycyclic aromatic hydrocarbons (PAHs). The chain is Jasmonate-induced oxygenase 2 from Arabidopsis thaliana (Mouse-ear cress).